The primary structure comprises 291 residues: 4-hydroxy-tetrahydrodipicolinate synthase (291 aa).

Thr-47 is a pyruvate binding site. Tyr-134 acts as the Proton donor/acceptor in catalysis. The active-site Schiff-base intermediate with substrate is Lys-162. Ile-205 contributes to the pyruvate binding site.

Belongs to the DapA family. Homotetramer; dimer of dimers.

The protein localises to the cytoplasm. It carries out the reaction L-aspartate 4-semialdehyde + pyruvate = (2S,4S)-4-hydroxy-2,3,4,5-tetrahydrodipicolinate + H2O + H(+). It functions in the pathway amino-acid biosynthesis; L-lysine biosynthesis via DAP pathway; (S)-tetrahydrodipicolinate from L-aspartate: step 3/4. Catalyzes the condensation of (S)-aspartate-beta-semialdehyde [(S)-ASA] and pyruvate to 4-hydroxy-tetrahydrodipicolinate (HTPA). The sequence is that of 4-hydroxy-tetrahydrodipicolinate synthase from Methanosphaerula palustris (strain ATCC BAA-1556 / DSM 19958 / E1-9c).